The sequence spans 176 residues: MLRFLNQCSQGRGAWLLMAFTALALELTALWFQHVMLLKPCVLCIYERCALFGVLGAALIGAIAPKTPLRYVAMVIWLYSAFRGVQLTYEHTMLQLYPSPFATCDFMVRFPEWLPLDKWVPQVFVASGDCAERQWDFLGLEMPQWLLGIFIAYLIVAVLVMISQPFKAKKRDLFGR.

Residues 1-14 (MLRFLNQCSQGRGA) are Cytoplasmic-facing. The chain crosses the membrane as a helical span at residues 15–31 (WLLMAFTALALELTALW). The Periplasmic segment spans residues 32-49 (FQHVMLLKPCVLCIYERC). C41 and C44 are oxidised to a cystine. A helical transmembrane segment spans residues 50–65 (ALFGVLGAALIGAIAP). Topologically, residues 66–71 (KTPLRY) are cytoplasmic. Residues 72–89 (VAMVIWLYSAFRGVQLTY) traverse the membrane as a helical segment. Over 90 to 144 (EHTMLQLYPSPFATCDFMVRFPEWLPLDKWVPQVFVASGDCAERQWDFLGLEMPQ) the chain is Periplasmic. A disulfide bridge connects residues C104 and C130. A helical membrane pass occupies residues 145 to 163 (WLLGIFIAYLIVAVLVMIS). Topologically, residues 164 to 176 (QPFKAKKRDLFGR) are cytoplasmic.

Belongs to the DsbB family.

The protein localises to the cell inner membrane. In terms of biological role, required for disulfide bond formation in some periplasmic proteins. Acts by oxidizing the DsbA protein. This chain is Disulfide bond formation protein B, found in Shigella sonnei (strain Ss046).